Here is a 220-residue protein sequence, read N- to C-terminus: Deoxyribose-phosphate aldolase (220 aa).

The active-site Proton donor/acceptor is the D89. K151 functions as the Schiff-base intermediate with acetaldehyde in the catalytic mechanism. The active-site Proton donor/acceptor is K180.

This sequence belongs to the DeoC/FbaB aldolase family. DeoC type 1 subfamily.

The protein localises to the cytoplasm. The enzyme catalyses 2-deoxy-D-ribose 5-phosphate = D-glyceraldehyde 3-phosphate + acetaldehyde. It functions in the pathway carbohydrate degradation; 2-deoxy-D-ribose 1-phosphate degradation; D-glyceraldehyde 3-phosphate and acetaldehyde from 2-deoxy-alpha-D-ribose 1-phosphate: step 2/2. In terms of biological role, catalyzes a reversible aldol reaction between acetaldehyde and D-glyceraldehyde 3-phosphate to generate 2-deoxy-D-ribose 5-phosphate. This is Deoxyribose-phosphate aldolase from Streptococcus mutans serotype c (strain ATCC 700610 / UA159).